We begin with the raw amino-acid sequence, 476 residues long: Cytochrome c oxidase subunit 1 (476 aa).

The helical transmembrane segment at 19-39 (LYYLWFSFLFGSYGFLLSVIL) threads the bilayer. E42 contacts Ca(2+). 8 helical membrane passes run 61–81 (MIFTIHGIIMIFFNIMPGLFG), 105–125 (ISLLLQPIAFVLVILSTAAEF), 151–171 (VIIFGLLVSGVASIMSSLNFI), 194–214 (LIITSGMLLLTLPVLTGGVLM), 240–260 (LFWFFGHPEVYILILPAFGVI), 278–298 (MILAMGCIAVLGSLVWVHHMY), 310–330 (FTSTTILISIPTGTKVFNWIC), and 345–365 (LLSLLFICTFTFGGTTGVILG). H66 contacts Fe(II)-heme a. H246 contributes to the Cu cation binding site. A cross-link (1'-histidyl-3'-tyrosine (His-Tyr)) is located at residues 246–250 (HPEVY). Y250 is an O2 binding site. 2 residues coordinate Cu cation: H295 and H296. H374 and D375 together coordinate Mg(2+). Helical transmembrane passes span 379 to 399 (VIAHFHFVLSIGAIIGLFTTV) and 415 to 435 (SIVILWSMLFFVGVILTFLPM). H382 is a heme a3 binding site. H384 serves as a coordination point for Fe(II)-heme a. Ca(2+) is bound at residue P448. A helical membrane pass occupies residues 455–475 (NGWNMICSIGSTMTLFGLLIF).

Belongs to the heme-copper respiratory oxidase family. As to quaternary structure, component of the cytochrome c oxidase (complex IV, CIV), a multisubunit enzyme composed of a catalytic core of 3 subunits and several supernumerary subunits. The complex exists as a monomer or a dimer and forms supercomplexes (SCs) in the inner mitochondrial membrane with ubiquinol-cytochrome c oxidoreductase (cytochrome b-c1 complex, complex III, CIII). Heme is required as a cofactor. Requires Cu cation as cofactor.

The protein localises to the mitochondrion inner membrane. The enzyme catalyses 4 Fe(II)-[cytochrome c] + O2 + 8 H(+)(in) = 4 Fe(III)-[cytochrome c] + 2 H2O + 4 H(+)(out). The protein operates within energy metabolism; oxidative phosphorylation. Component of the cytochrome c oxidase, the last enzyme in the mitochondrial electron transport chain which drives oxidative phosphorylation. The respiratory chain contains 3 multisubunit complexes succinate dehydrogenase (complex II, CII), ubiquinol-cytochrome c oxidoreductase (cytochrome b-c1 complex, complex III, CIII) and cytochrome c oxidase (complex IV, CIV), that cooperate to transfer electrons derived from NADH and succinate to molecular oxygen, creating an electrochemical gradient over the inner membrane that drives transmembrane transport and the ATP synthase. Cytochrome c oxidase is the component of the respiratory chain that catalyzes the reduction of oxygen to water. Electrons originating from reduced cytochrome c in the intermembrane space (IMS) are transferred via the dinuclear copper A center (CU(A)) of subunit 2 and heme A of subunit 1 to the active site in subunit 1, a binuclear center (BNC) formed by heme A3 and copper B (CU(B)). The BNC reduces molecular oxygen to 2 water molecules using 4 electrons from cytochrome c in the IMS and 4 protons from the mitochondrial matrix. This Plasmodium falciparum protein is Cytochrome c oxidase subunit 1 (MT-CO1).